A 453-amino-acid chain; its full sequence is Serine--tRNA ligase (453 aa).

Position 249 to 251 (249 to 251 (TSE)) interacts with L-serine. Residues 280-282 (RKE) and V296 each bind ATP. Position 303 (E303) interacts with L-serine. 367 to 370 (EMVS) is an ATP binding site. L-serine is bound at residue T404.

Belongs to the class-II aminoacyl-tRNA synthetase family. Type-1 seryl-tRNA synthetase subfamily. As to quaternary structure, homodimer. The tRNA molecule binds across the dimer.

It localises to the cytoplasm. The catalysed reaction is tRNA(Ser) + L-serine + ATP = L-seryl-tRNA(Ser) + AMP + diphosphate + H(+). It carries out the reaction tRNA(Sec) + L-serine + ATP = L-seryl-tRNA(Sec) + AMP + diphosphate + H(+). Its pathway is aminoacyl-tRNA biosynthesis; selenocysteinyl-tRNA(Sec) biosynthesis; L-seryl-tRNA(Sec) from L-serine and tRNA(Sec): step 1/1. Its function is as follows. Catalyzes the attachment of serine to tRNA(Ser). Is also able to aminoacylate tRNA(Sec) with serine, to form the misacylated tRNA L-seryl-tRNA(Sec), which will be further converted into selenocysteinyl-tRNA(Sec). This Archaeoglobus fulgidus (strain ATCC 49558 / DSM 4304 / JCM 9628 / NBRC 100126 / VC-16) protein is Serine--tRNA ligase.